Here is a 471-residue protein sequence, read N- to C-terminus: tRNA-2-methylthio-N(6)-dimethylallyladenosine synthase (471 aa).

An MTTase N-terminal domain is found at 33 to 151; the sequence is KKYMITTYGC…FPELLSRSME (119 aa). Residues cysteine 42, cysteine 78, cysteine 112, cysteine 188, cysteine 192, and cysteine 195 each coordinate [4Fe-4S] cluster. A Radical SAM core domain is found at 174–404; it reads RKYDLKGFIN…LDKVNEISAE (231 aa). Residues 407 to 470 enclose the TRAM domain; sequence QSYLNKVVEV…TFSLNGEVIQ (64 aa).

Belongs to the methylthiotransferase family. MiaB subfamily. As to quaternary structure, monomer. It depends on [4Fe-4S] cluster as a cofactor.

The protein resides in the cytoplasm. It carries out the reaction N(6)-dimethylallyladenosine(37) in tRNA + (sulfur carrier)-SH + AH2 + 2 S-adenosyl-L-methionine = 2-methylsulfanyl-N(6)-dimethylallyladenosine(37) in tRNA + (sulfur carrier)-H + 5'-deoxyadenosine + L-methionine + A + S-adenosyl-L-homocysteine + 2 H(+). Its function is as follows. Catalyzes the methylthiolation of N6-(dimethylallyl)adenosine (i(6)A), leading to the formation of 2-methylthio-N6-(dimethylallyl)adenosine (ms(2)i(6)A) at position 37 in tRNAs that read codons beginning with uridine. The protein is tRNA-2-methylthio-N(6)-dimethylallyladenosine synthase of Alkaliphilus oremlandii (strain OhILAs) (Clostridium oremlandii (strain OhILAs)).